Reading from the N-terminus, the 56-residue chain is Small ribosomal subunit protein uS14 (56 aa).

Positions 21, 24, 39, and 42 each coordinate Zn(2+).

This sequence belongs to the universal ribosomal protein uS14 family. Requires Zn(2+) as cofactor.

In Triticum aestivum (Wheat), this protein is Small ribosomal subunit protein uS14 (RPS29).